The chain runs to 80 residues: Acyl carrier protein (80 aa).

The 76-residue stretch at 4 to 79 (EAILEKVRSI…DAVKYIEDKQ (76 aa)) folds into the Carrier domain. Serine 39 bears the O-(pantetheine 4'-phosphoryl)serine mark.

This sequence belongs to the acyl carrier protein (ACP) family. In terms of processing, 4'-phosphopantetheine is transferred from CoA to a specific serine of apo-ACP by AcpS. This modification is essential for activity because fatty acids are bound in thioester linkage to the sulfhydryl of the prosthetic group.

It localises to the cytoplasm. It participates in lipid metabolism; fatty acid biosynthesis. Functionally, carrier of the growing fatty acid chain in fatty acid biosynthesis. In Prochlorococcus marinus (strain MIT 9313), this protein is Acyl carrier protein.